Reading from the N-terminus, the 208-residue chain is GATA transcription factor 29 (208 aa).

Residues 155–208 form a GATA-type; atypical zinc finger; it reads GMKKCTNMNCNALNTPMWRRGPLGPKSLCNACGIKFRKEEERKAKRNVVIVLDD.

The protein belongs to the type IV zinc-finger family. Class B subfamily.

It localises to the nucleus. Functionally, transcriptional regulator that specifically binds 5'-GATA-3' or 5'-GAT-3' motifs within gene promoters. The polypeptide is GATA transcription factor 29 (GATA29) (Arabidopsis thaliana (Mouse-ear cress)).